We begin with the raw amino-acid sequence, 224 residues long: Small ribosomal subunit protein uS5 (224 aa).

The interval 1 to 40 (MAEQPAGGQGAGDSRDSRGDRDSRGRRGDGGRGGRDRDGD) is disordered. The span at 13–40 (DSRDSRGDRDSRGRRGDGGRGGRDRDGD) shows a compositional bias: basic and acidic residues. Residues 44–107 (YLERVVAINR…EEARKGFFRV (64 aa)) enclose the S5 DRBM domain.

It belongs to the universal ribosomal protein uS5 family. As to quaternary structure, part of the 30S ribosomal subunit. Contacts proteins S4 and S8.

Functionally, with S4 and S12 plays an important role in translational accuracy. In terms of biological role, located at the back of the 30S subunit body where it stabilizes the conformation of the head with respect to the body. The polypeptide is Small ribosomal subunit protein uS5 (Mycolicibacterium paratuberculosis (strain ATCC BAA-968 / K-10) (Mycobacterium paratuberculosis)).